A 1004-amino-acid polypeptide reads, in one-letter code: Kinesin-like protein KIN-7I (1004 aa).

A Kinesin motor domain is found at 6–326 (KILVSVRVRP…LLFATCAKEV (321 aa)). 89–96 (GQTSSGKT) lines the ATP pocket. 3 coiled-coil regions span residues 335–402 (VVSE…AQSR), 517–576 (KKEY…QKQS), and 634–661 (SVEK…DQSE). Disordered stretches follow at residues 567–599 (EQSV…KSLP), 628–671 (SQQT…PEDE), and 802–830 (TMQH…GEKT). 2 stretches are compositionally biased toward basic and acidic residues: residues 569–582 (SVEK…KEEM) and 634–652 (SVEK…EDLK). The span at 653 to 663 (QNLSMDQSEQL) shows a compositional bias: polar residues. K881 participates in a covalent cross-link: Glycyl lysine isopeptide (Lys-Gly) (interchain with G-Cter in ubiquitin).

This sequence belongs to the TRAFAC class myosin-kinesin ATPase superfamily. Kinesin family. KIN-7 subfamily.

This is Kinesin-like protein KIN-7I from Arabidopsis thaliana (Mouse-ear cress).